The primary structure comprises 357 residues: MQKVKEMIGSINELDTKAQQQMEQHLNTLTKPLGSLGLLESLAIKIAGITGHTQPEIDPATVIVMVADHGVAAEGVSAYPSEVTQQMVHNFITGGAAINVLSRVSNASVQIVDIGVNGTLQLPGLINKNVRHGTNNMAQGPSMEREEAIAAIEVGIEVAQAAIQNGAKLLALGEMGIGNTTASSAMLAALEQVPVEQIVGFGTGLSHEGKEKKVAVIKRAIEVNQPNAADPIDVLAKVGGLEIAGLAGIVLGAAAWRIPVLVDGFITAVAALTAVRIAPLCVHYLIASHQSVEPGHVCVNKLLGLTPLVNLNLRLGEGSGTAIALPIVRSAIRIAHEMATFEQAGVSGAIEDVGKEK.

E317 (proton acceptor) is an active-site residue.

The protein belongs to the CobT family.

It catalyses the reaction 5,6-dimethylbenzimidazole + nicotinate beta-D-ribonucleotide = alpha-ribazole 5'-phosphate + nicotinate + H(+). The protein operates within nucleoside biosynthesis; alpha-ribazole biosynthesis; alpha-ribazole from 5,6-dimethylbenzimidazole: step 1/2. Functionally, catalyzes the synthesis of alpha-ribazole-5'-phosphate from nicotinate mononucleotide (NAMN) and 5,6-dimethylbenzimidazole (DMB). In Halalkalibacterium halodurans (strain ATCC BAA-125 / DSM 18197 / FERM 7344 / JCM 9153 / C-125) (Bacillus halodurans), this protein is Nicotinate-nucleotide--dimethylbenzimidazole phosphoribosyltransferase.